We begin with the raw amino-acid sequence, 324 residues long: MASPTLKLNSGYDMPQVGFGLWKVDNAVCADTVYNAIKAGYRLFDGACDYGNEKECGEGVARAIKDGLVKREDLFIVSKLWQTFHDEDKVEPITRRQLADWQIDYFDLFLVHFPAALEYVDPSVRYPPGWFYDGKSEVRWSKTTTLQQTWGAMERLVDKGLARSIGVSNYQAQSVYDALIYARIKPATLQIEHHPYLQQPDLVSLAQTEGIVVTAYSSFGPTGFMELDMPRAKSVAPLMDSPVIKALADKHRRTPAQVLLRWATQRGIAVIPKTSRPEVMAQNLDNTSFDLDSEDLAKIADMDLNIRFNKPTNYFSANKLYLFG.

Catalysis depends on tyrosine 50, which acts as the Proton donor. Histidine 112 contributes to the substrate binding site. NAD(+) contacts are provided by residues 168–169 (SN), 217–226 (SSFGPTGFME), and 273–283 (KTSRPEVMAQN).

Belongs to the aldo/keto reductase family.

The catalysed reaction is an alditol + NAD(+) = an aldose + NADH + H(+). It carries out the reaction an alditol + NADP(+) = an aldose + NADPH + H(+). It catalyses the reaction xylitol + NAD(+) = D-xylose + NADH + H(+). The enzyme catalyses xylitol + NADP(+) = D-xylose + NADPH + H(+). Its pathway is carbohydrate metabolism; D-xylose degradation. It participates in carbohydrate degradation; L-arabinose degradation via L-arabinitol; D-xylulose 5-phosphate from L-arabinose (fungal route): step 1/5. Its function is as follows. Catalyzes the initial reaction in the xylose utilization pathway by reducing D-xylose into xylitol. Xylose is a major component of hemicelluloses such as xylan. Most fungi utilize D-xylose via three enzymatic reactions, xylose reductase (XR), xylitol dehydrogenase (XDH), and xylulokinase, to form xylulose 5-phosphate, which enters pentose phosphate pathway. Also major aldose reductase in pentose and D-galactose catabolism. Reduces the pentose L-arabinose and the hexose D-galactose to their respective polyols. Responsible for extracellular beta-galactosidase formation and cellulase induction during growth on lactose. This is NAD(P)H-dependent D-xylose reductase xyl1 (xyl1) from Hypocrea jecorina (Trichoderma reesei).